Consider the following 495-residue polypeptide: ATP synthase subunit beta, chloroplastic (495 aa).

An ATP-binding site is contributed by 172 to 179 (GGAGVGKT).

Belongs to the ATPase alpha/beta chains family. As to quaternary structure, F-type ATPases have 2 components, CF(1) - the catalytic core - and CF(0) - the membrane proton channel. CF(1) has five subunits: alpha(3), beta(3), gamma(1), delta(1), epsilon(1). CF(0) has four main subunits: a(1), b(1), b'(1) and c(9-12).

It is found in the plastid. It localises to the chloroplast thylakoid membrane. The catalysed reaction is ATP + H2O + 4 H(+)(in) = ADP + phosphate + 5 H(+)(out). Produces ATP from ADP in the presence of a proton gradient across the membrane. The catalytic sites are hosted primarily by the beta subunits. This Eucomis bicolor (King's flower) protein is ATP synthase subunit beta, chloroplastic.